Here is a 359-residue protein sequence, read N- to C-terminus: N-acetylneuraminate-9-phosphate synthase (359 aa).

N6-acetyllysine occurs at positions 61, 74, and 79. Ser275 is subject to Phosphoserine. Lys290 bears the N6-acetyllysine mark. In terms of domain architecture, AFP-like spans 294–353 (SVVAKVKIPAGTTLTLDMLTVKVGEPKGYPPEDIFNLAGKKVLVTIEEDDTVMEESVESH).

As to expression, ubiquitous.

Its subcellular location is the cytoplasm. It catalyses the reaction aldehydo-N-acetyl-D-mannosamine 6-phosphate + phosphoenolpyruvate + H2O = N-acetylneuraminate 9-phosphate + phosphate. In terms of biological role, catalyzes condensation of phosphoenolpyruvate (PEP) and N-acetylmannosamine 6-phosphate (ManNAc-6-P) to synthesize N-acetylneuraminate-9-phosphate (Neu5Ac-9-P). Neu5Ac-9-P is the phosphorylated forms of sialic acid N-acetylneuraminic acid (Neu5Ac). In contrast with human ortholog, has no detectable activity towards D-mannose 6-phosphate. The sequence is that of N-acetylneuraminate-9-phosphate synthase from Mus musculus (Mouse).